The chain runs to 104 residues: Succinate dehydrogenase assembly factor 4, mitochondrial (104 aa).

A mitochondrion-targeting transit peptide spans 1–30 (MVSTTLSVSRMTFVWRAARPSLLNHSLRKM). Residues 29-104 (KMSYQEGKPE…WERKGRCIDF (76 aa)) are disordered. 2 stretches are compositionally biased toward basic and acidic residues: residues 63–83 (EREP…EKGG) and 91–104 (RYGD…CIDF).

It belongs to the SDHAF4 family. As to quaternary structure, interacts with Sdha in its FAD-bound form.

It is found in the mitochondrion matrix. Functionally, plays an essential role in the assembly of succinate dehydrogenase (SDH), an enzyme complex (also referred to as respiratory complex II) that is a component of both the tricarboxylic acid (TCA) cycle and the mitochondrial electron transport chain, and which couples the oxidation of succinate to fumarate with the reduction of ubiquinone (coenzyme Q) to ubiquinol. Binds to the flavoprotein subunit Sdha in its FAD-bound form, blocking the generation of excess reactive oxygen species (ROS) and facilitating its assembly with the iron-sulfur protein subunit Sdhb into the SDH catalytic dimer. The protein is Succinate dehydrogenase assembly factor 4, mitochondrial of Mus musculus (Mouse).